Here is a 76-residue protein sequence, read N- to C-terminus: Probable 26S proteasome complex subunit dss-1 (76 aa).

Disordered stretches follow at residues 1–28 (MSST…FEEF) and 52–76 (DDET…HPIA). Composition is skewed to basic and acidic residues over residues 7–20 (TKKD…KKET) and 57–70 (ESEF…ELRK).

This sequence belongs to the DSS1/SEM1 family. In terms of assembly, part of the 26S proteasome.

Its subcellular location is the nucleus. The protein localises to the cytoplasm. Its function is as follows. Subunit of the 26S proteasome which plays a role in ubiquitin-dependent proteolysis. Has an essential role in oogenesis and larval growth. Required for intestinal function and default lifespan. This chain is Probable 26S proteasome complex subunit dss-1, found in Caenorhabditis briggsae.